A 338-amino-acid polypeptide reads, in one-letter code: NADPH dehydrogenase (338 aa).

22–25 serves as a coordination point for FMN; it reads SPMC. Tyr-27 provides a ligand contact to substrate. Residues Ala-59 and Gln-101 each contribute to the FMN site. Substrate is bound at residue 163–166; it reads HAAH. FMN-binding positions include Arg-214 and 306–307; that span reads GR.

It belongs to the NADH:flavin oxidoreductase/NADH oxidase family. NamA subfamily. Homotetramer. FMN serves as cofactor.

It catalyses the reaction A + NADPH + H(+) = AH2 + NADP(+). Catalyzes the reduction of the double bond of an array of alpha,beta-unsaturated aldehydes and ketones. It also reduces the nitro group of nitroester and nitroaromatic compounds. It could have a role in detoxification processes. The chain is NADPH dehydrogenase from Listeria monocytogenes serotype 4a (strain HCC23).